A 549-amino-acid chain; its full sequence is TBC1 domain family member 3I (549 aa).

Positions 101–293 constitute a Rab-GAP TBC domain; it reads GMPMNIRGPM…RLWDVYLVEG (193 aa). 2 S-palmitoyl cysteine lipidation sites follow: cysteine 318 and cysteine 325. Disordered stretches follow at residues 350 to 443 and 507 to 526; these read LTRK…QGGP and AAPS…DEQQ. The segment covering 398-417 has biased composition (low complexity); sequence PRPIWSASPPRAPRSSTPCP.

Ubiquitinated by a CUL7-based E3 ligase, which leads to proteasomal degradation. Post-translationally, palmitoylation is required for membrane localization and protects TBC1D3 from ubiquitination.

It is found in the cell membrane. In terms of biological role, acts as a GTPase activating protein for RAB5. Does not act on RAB4 or RAB11. The protein is TBC1 domain family member 3I of Homo sapiens (Human).